The following is a 251-amino-acid chain: Hydroxyacylglutathione hydrolase (251 aa).

Zn(2+) is bound by residues His-53, His-55, Asp-57, His-58, His-110, Asp-127, and His-165.

Belongs to the metallo-beta-lactamase superfamily. Glyoxalase II family. As to quaternary structure, monomer. The cofactor is Zn(2+).

It carries out the reaction an S-(2-hydroxyacyl)glutathione + H2O = a 2-hydroxy carboxylate + glutathione + H(+). The protein operates within secondary metabolite metabolism; methylglyoxal degradation; (R)-lactate from methylglyoxal: step 2/2. Thiolesterase that catalyzes the hydrolysis of S-D-lactoyl-glutathione to form glutathione and D-lactic acid. This chain is Hydroxyacylglutathione hydrolase, found in Klebsiella pneumoniae subsp. pneumoniae (strain ATCC 700721 / MGH 78578).